The chain runs to 257 residues: NAD kinase (257 aa).

Asp-46 functions as the Proton acceptor in the catalytic mechanism. Residues 46–47, His-51, 116–117, Asp-146, Ala-154, 157–162, and Gln-218 each bind NAD(+); these read DG, NE, and TAYNLS.

Belongs to the NAD kinase family. A divalent metal cation serves as cofactor.

The protein resides in the cytoplasm. It carries out the reaction NAD(+) + ATP = ADP + NADP(+) + H(+). In terms of biological role, involved in the regulation of the intracellular balance of NAD and NADP, and is a key enzyme in the biosynthesis of NADP. Catalyzes specifically the phosphorylation on 2'-hydroxyl of the adenosine moiety of NAD to yield NADP. This is NAD kinase from Rhizobium meliloti (strain 1021) (Ensifer meliloti).